We begin with the raw amino-acid sequence, 173 residues long: Co-chaperone protein HscB homolog (173 aa).

The J domain occupies 5 to 77 (CHFALFELKP…PKRARYLLAM (73 aa)).

Belongs to the HscB family. As to quaternary structure, interacts with HscA and stimulates its ATPase activity.

Functionally, co-chaperone involved in the maturation of iron-sulfur cluster-containing proteins. Seems to help targeting proteins to be folded toward HscA. The polypeptide is Co-chaperone protein HscB homolog (Pseudomonas syringae pv. tomato (strain ATCC BAA-871 / DC3000)).